A 572-amino-acid polypeptide reads, in one-letter code: Proline--tRNA ligase (572 aa).

This sequence belongs to the class-II aminoacyl-tRNA synthetase family. ProS type 1 subfamily. In terms of assembly, homodimer.

The protein localises to the cytoplasm. The enzyme catalyses tRNA(Pro) + L-proline + ATP = L-prolyl-tRNA(Pro) + AMP + diphosphate. Its function is as follows. Catalyzes the attachment of proline to tRNA(Pro) in a two-step reaction: proline is first activated by ATP to form Pro-AMP and then transferred to the acceptor end of tRNA(Pro). As ProRS can inadvertently accommodate and process non-cognate amino acids such as alanine and cysteine, to avoid such errors it has two additional distinct editing activities against alanine. One activity is designated as 'pretransfer' editing and involves the tRNA(Pro)-independent hydrolysis of activated Ala-AMP. The other activity is designated 'posttransfer' editing and involves deacylation of mischarged Ala-tRNA(Pro). The misacylated Cys-tRNA(Pro) is not edited by ProRS. The sequence is that of Proline--tRNA ligase from Alteromonas mediterranea (strain DSM 17117 / CIP 110805 / LMG 28347 / Deep ecotype).